A 313-amino-acid polypeptide reads, in one-letter code: Protoheme IX farnesyltransferase (313 aa).

9 helical membrane passes run 29–49, 57–77, 101–123, 124–144, 157–177, 185–205, 225–245, 247–267, and 287–307; these read VISLLLWTTVTAMFMAARGWP, LWLLIVVSVAGYMSAGSAGVF, LISSRNAAIFGTTLQVLSFVMLW, VWGTPLAAWMSLAGFVFYVVI, IVIGGAAGCFPPLVGWAAVTG, YLFAIIFFWTPVHFWALALMI, MTVAQIGLYAIYTVVLSLMPV, FGAVSWIYFVSGALLGAWLLW, and AVPLYLYSMLYLALLFLAGAI.

It belongs to the UbiA prenyltransferase family. Protoheme IX farnesyltransferase subfamily.

Its subcellular location is the cell membrane. The enzyme catalyses heme b + (2E,6E)-farnesyl diphosphate + H2O = Fe(II)-heme o + diphosphate. The protein operates within porphyrin-containing compound metabolism; heme O biosynthesis; heme O from protoheme: step 1/1. In terms of biological role, converts heme B (protoheme IX) to heme O by substitution of the vinyl group on carbon 2 of heme B porphyrin ring with a hydroxyethyl farnesyl side group. The protein is Protoheme IX farnesyltransferase of Deinococcus radiodurans (strain ATCC 13939 / DSM 20539 / JCM 16871 / CCUG 27074 / LMG 4051 / NBRC 15346 / NCIMB 9279 / VKM B-1422 / R1).